We begin with the raw amino-acid sequence, 51 residues long: uncharacterized protein (51 aa).

Positions 3–30 form a coiled coil; that stretch reads EEKAVSLAKEIIELDIKRDEMLETFMQL.

This is an uncharacterized protein from Bacillus subtilis (strain 168).